The following is a 280-amino-acid chain: Phosphatidylglycerol--prolipoprotein diacylglyceryl transferase (280 aa).

The next 3 membrane-spanning stretches (helical) occupy residues 21-41 (WYGIIMAVAIVLATWMAISEG), 54-74 (LLLWAVPLGYVGARIYYVIFE), and 88-108 (IWNGGIAIYGGLIAGLIVLLI). Position 136 (Arg-136) interacts with a 1,2-diacyl-sn-glycero-3-phospho-(1'-sn-glycerol). Helical transmembrane passes span 176–196 (QPTFLYESFFNLIGLIIILSL), 206–226 (GEVFMSYLLWYSVVRFFVEGM), and 236–256 (IIRVSQALSLVLFIATIILWI).

The protein belongs to the Lgt family.

It is found in the cell membrane. It carries out the reaction L-cysteinyl-[prolipoprotein] + a 1,2-diacyl-sn-glycero-3-phospho-(1'-sn-glycerol) = an S-1,2-diacyl-sn-glyceryl-L-cysteinyl-[prolipoprotein] + sn-glycerol 1-phosphate + H(+). It participates in protein modification; lipoprotein biosynthesis (diacylglyceryl transfer). In terms of biological role, catalyzes the transfer of the diacylglyceryl group from phosphatidylglycerol to the sulfhydryl group of the N-terminal cysteine of a prolipoprotein, the first step in the formation of mature lipoproteins. The chain is Phosphatidylglycerol--prolipoprotein diacylglyceryl transferase from Lactobacillus acidophilus (strain ATCC 700396 / NCK56 / N2 / NCFM).